Reading from the N-terminus, the 217-residue chain is Protein GrpE (217 aa).

Residues 1–10 (MSDHAEHAAD) show a composition bias toward basic and acidic residues. Positions 1-39 (MSDHAEHAADAADTDAPEGDDAGGDDGEQAGDDGTSALS) are disordered. Acidic residues predominate over residues 12–31 (ADTDAPEGDDAGGDDGEQAG).

The protein belongs to the GrpE family. In terms of assembly, homodimer.

Its subcellular location is the cytoplasm. Participates actively in the response to hyperosmotic and heat shock by preventing the aggregation of stress-denatured proteins, in association with DnaK and GrpE. It is the nucleotide exchange factor for DnaK and may function as a thermosensor. Unfolded proteins bind initially to DnaJ; upon interaction with the DnaJ-bound protein, DnaK hydrolyzes its bound ATP, resulting in the formation of a stable complex. GrpE releases ADP from DnaK; ATP binding to DnaK triggers the release of the substrate protein, thus completing the reaction cycle. Several rounds of ATP-dependent interactions between DnaJ, DnaK and GrpE are required for fully efficient folding. This Halobacterium salinarum (strain ATCC 29341 / DSM 671 / R1) protein is Protein GrpE.